A 457-amino-acid polypeptide reads, in one-letter code: Argininosuccinate lyase (457 aa).

It belongs to the lyase 1 family. Argininosuccinate lyase subfamily.

The protein localises to the cytoplasm. The catalysed reaction is 2-(N(omega)-L-arginino)succinate = fumarate + L-arginine. The protein operates within amino-acid biosynthesis; L-arginine biosynthesis; L-arginine from L-ornithine and carbamoyl phosphate: step 3/3. The protein is Argininosuccinate lyase of Citrobacter koseri (strain ATCC BAA-895 / CDC 4225-83 / SGSC4696).